Consider the following 450-residue polypeptide: tRNA modification GTPase MnmE (450 aa).

(6S)-5-formyl-5,6,7,8-tetrahydrofolate is bound by residues Arg-23, Glu-79, and Lys-118. Positions 214-374 constitute a TrmE-type G domain; that stretch reads GITLILVGKP…LKEHILNKVG (161 aa). Residue Asn-224 coordinates K(+). GTP is bound by residues 224–229, 243–249, and 268–271; these read NAGKSS, TSIAGTT, and DTAG. Residue Ser-228 participates in Mg(2+) binding. Residues Thr-243, Ile-245, and Thr-248 each coordinate K(+). Thr-249 provides a ligand contact to Mg(2+). Residue Lys-450 participates in (6S)-5-formyl-5,6,7,8-tetrahydrofolate binding.

The protein belongs to the TRAFAC class TrmE-Era-EngA-EngB-Septin-like GTPase superfamily. TrmE GTPase family. In terms of assembly, homodimer. Heterotetramer of two MnmE and two MnmG subunits. K(+) serves as cofactor.

It is found in the cytoplasm. Functionally, exhibits a very high intrinsic GTPase hydrolysis rate. Involved in the addition of a carboxymethylaminomethyl (cmnm) group at the wobble position (U34) of certain tRNAs, forming tRNA-cmnm(5)s(2)U34. In Francisella tularensis subsp. novicida (strain U112), this protein is tRNA modification GTPase MnmE.